A 347-amino-acid polypeptide reads, in one-letter code: Endophilin-A3 (347 aa).

Residues Met-1–Ile-21 form a membrane-binding amphipathic helix region. Positions Ser-18–Gln-249 constitute a BAR domain. A required for dimerization upon membrane association region spans residues Pro-60–Pro-87. Residues Glu-180–Met-201 are a coiled coil. Positions Phe-218–Asp-254 are interaction with ARC. The segment at Tyr-255–Pro-284 is disordered. Polar residues predominate over residues Val-260–Pro-284. The 60-residue stretch at Ser-285–Pro-344 folds into the SH3 domain.

The protein belongs to the endophilin family. Interacts with SGIP1 and DYDC1. Interacts with FASLG. Interacts with ATXN2. Interacts with BIN2. Interacts with ARC, DNM1 and SYNJ1. Expressed at high level in testis and at lower level in brain and liver.

It localises to the cytoplasm. It is found in the early endosome membrane. Its function is as follows. Implicated in endocytosis. May recruit other proteins to membranes with high curvature. This Rattus norvegicus (Rat) protein is Endophilin-A3 (Sh3gl3).